A 276-amino-acid chain; its full sequence is Putative inactive ferrous iron permease EfeU (276 aa).

Met1 is a topological domain (periplasmic). Residues 2 to 22 traverse the membrane as a helical segment; it reads FVPFLIMLREGLEAALIVSLI. The Cytoplasmic segment spans residues 23–35; sequence ASYLKRTQRGMXD. Residues 36–56 form a helical membrane-spanning segment; it reads CVMWIGVLLAAALCLGLGIFI. Topologically, residues 57-69 are periplasmic; it reads NETTGEFPQKEQE. Residues 70–90 traverse the membrane as a helical segment; sequence LFEGIVAVIAVVILTWMVFWM. Residues 91–118 lie on the Cytoplasmic side of the membrane; the sequence is RKVSRNVKVQLEQAVDSALQRGNHHGWA. The helical transmembrane segment at 119–139 threads the bilayer; the sequence is LVMMVFFAVAREGLESVFFLL. Over 140-147 the chain is Periplasmic; sequence AAFQQDVG. A helical membrane pass occupies residues 148–168; sequence IWPPLGAMLGLATAVVLGFLL. Topologically, residues 169–179 are cytoplasmic; it reads YWGGIRLNLGA. A helical membrane pass occupies residues 180-200; the sequence is FFKWTSLFILFVAAGLAAGAI. At 201 to 244 the chain is on the periplasmic side; the sequence is RAFHEAGLWNHFQEIAFDMSAVLSTHSLFGTLMEGIFGYQEAPS. The chain crosses the membrane as a helical span at residues 245–265; the sequence is VSEVAVWFIYLIPALVAFALP. Residues 266-276 lie on the Cytoplasmic side of the membrane; it reads PRAGATASRSA.

It belongs to the oxidase-dependent Fe transporter (OFeT) (TC 9.A.10.1) family. As to quaternary structure, part of a ferrous iron transporter composed of EfeU, EfeO and EfeB. However, this EfeUOB tripartite iron transporter is defective in E.coli strain K12 due to a frameshift mutation in EfeU.

The protein resides in the cell inner membrane. The sequence is that of Putative inactive ferrous iron permease EfeU (efeU) from Escherichia coli (strain K12).